The sequence spans 146 residues: Single-stranded DNA-binding protein 1-A, mitochondrial (146 aa).

The N-terminal 17 residues, methionine 1–glutamine 17, are a transit peptide targeting the mitochondrion. The region spanning isoleucine 28–serine 140 is the SSB domain.

In terms of assembly, homotetramer.

Its subcellular location is the mitochondrion. It localises to the mitochondrion matrix. The protein localises to the mitochondrion nucleoid. In terms of biological role, binds preferentially and cooperatively to pyrimidine rich single-stranded DNA (ss-DNA). Required to maintain the copy number of mitochondrial DNA (mtDNA) and plays crucial roles during mtDNA replication that stimulate activity of the DNA polymerase at the replication fork. May also function in mtDNA repair. The polypeptide is Single-stranded DNA-binding protein 1-A, mitochondrial (ssbp1-a) (Xenopus laevis (African clawed frog)).